The following is a 447-amino-acid chain: Tektin-4 (447 aa).

Coiled-coil stretches lie at residues 322–348 (LRKT…DKEA) and 375–423 (FRLL…TNSL).

The protein belongs to the tektin family. As to quaternary structure, microtubule inner protein component of sperm flagellar doublet microtubules. In terms of processing, ubiquitinated, leading to its degradation. Deubiquitinated by USP16, promoting its stability. Detected in testis, where it is weakly expressed in round spermatids, and strongly expressed in the flagellum of step 16 elongated spermatids (at protein level). Expressed in spermatozoa. In the sperm flagellum, localizes to the principal piece and midpiece (at protein level). Specifically expressed in testis; not detected in other tissues tested.

Its subcellular location is the cytoplasm. It localises to the cytoskeleton. The protein localises to the cilium axoneme. It is found in the flagellum axoneme. Microtubule inner protein (MIP) part of the dynein-decorated doublet microtubules (DMTs) in cilia and flagellar axoneme. Forms filamentous polymers in the walls of ciliary and flagellar microtubules. Contributes to normal sperm motility. The sequence is that of Tektin-4 (Tekt4) from Mus musculus (Mouse).